A 535-amino-acid chain; its full sequence is CTP synthase (535 aa).

Residues 1–266 (MKTKFIFITG…DERVVEKLNI (266 aa)) form an amidoligase domain region. Residue S14 participates in CTP binding. A UTP-binding site is contributed by S14. Residues 15–20 (SIGKGL) and D72 contribute to the ATP site. Mg(2+)-binding residues include D72 and E140. Residues 147 to 149 (DIE), 187 to 192 (KTKPTQ), and K223 each bind CTP. UTP is bound by residues 187-192 (KTKPTQ) and K223. Residues 292–534 (RIAIVGKYVN…VRAALIQRDA (243 aa)) form the Glutamine amidotransferase type-1 domain. G354 provides a ligand contact to L-glutamine. Residue C381 is the Nucleophile; for glutamine hydrolysis of the active site. Residues 382-385 (LGMQ), E405, and R462 contribute to the L-glutamine site. Active-site residues include H507 and E509.

Belongs to the CTP synthase family. Homotetramer.

It catalyses the reaction UTP + L-glutamine + ATP + H2O = CTP + L-glutamate + ADP + phosphate + 2 H(+). It carries out the reaction L-glutamine + H2O = L-glutamate + NH4(+). The catalysed reaction is UTP + NH4(+) + ATP = CTP + ADP + phosphate + 2 H(+). It functions in the pathway pyrimidine metabolism; CTP biosynthesis via de novo pathway; CTP from UDP: step 2/2. Allosterically activated by GTP, when glutamine is the substrate; GTP has no effect on the reaction when ammonia is the substrate. The allosteric effector GTP functions by stabilizing the protein conformation that binds the tetrahedral intermediate(s) formed during glutamine hydrolysis. Inhibited by the product CTP, via allosteric rather than competitive inhibition. Catalyzes the ATP-dependent amination of UTP to CTP with either L-glutamine or ammonia as the source of nitrogen. Regulates intracellular CTP levels through interactions with the four ribonucleotide triphosphates. The chain is CTP synthase from Pelobacter propionicus (strain DSM 2379 / NBRC 103807 / OttBd1).